Here is a 148-residue protein sequence, read N- to C-terminus: MSKYAILGLVLVGTVASLDFIGRTQSAAIKGRLVCEGKPASGVKVKLMESDNSFGPGFLDSDDKMASGKADSHGEFNLSGSTKEITGIEPYLVVFHDCKDGITPCQRVFRVNVPKSYTNSGSSAKKTYDAGVIELAGKYPGETRSCLN.

An N-terminal signal peptide occupies residues 1-17; sequence MSKYAILGLVLVGTVAS. N-linked (GlcNAc...) asparagine glycosylation is present at asparagine 77.

This sequence belongs to the nematode transthyretin-like family.

The protein resides in the secreted. The protein is Transthyretin-like protein 2 (ttr-2) of Caenorhabditis elegans.